A 298-amino-acid chain; its full sequence is MSTNPLVWQQATVRIQQFYRLTKPRVVSLIVFTAVIGMFLSVPGAVPLDKLLLGTIGISLVAGAAAALNCLVEYKFDAIMARTKGRPLPQGKVSVPETLFFLVMVGGLGLFILHQWINPLTMWLTLGTFVGYAIIYTVILKPLTPQNIVIGGASGAMPPVLGWAAITGEISADALLLFLIIFAWTPPHFWALALYRKSDYAKIGMPMLPVTHGEEFTRLHVLLYTIILCIATVLPYLTQMSGLIYLVSVLILDAIFLYYAIRIYLHYTDQIAREAFRYSIIYLALLFTALLVDHYFYF.

The next 9 helical transmembrane spans lie at 26–46 (VVSL…PGAV), 52–72 (LLGT…NCLV), 93–113 (VSVP…LFIL), 120–140 (LTMW…TVIL), 148–168 (IVIG…AITG), 174–194 (ALLL…ALAL), 219–239 (LHVL…YLTQ), 241–261 (SGLI…YYAI), and 278–298 (YSII…YFYF).

Belongs to the UbiA prenyltransferase family. Protoheme IX farnesyltransferase subfamily.

It is found in the cell inner membrane. The enzyme catalyses heme b + (2E,6E)-farnesyl diphosphate + H2O = Fe(II)-heme o + diphosphate. It participates in porphyrin-containing compound metabolism; heme O biosynthesis; heme O from protoheme: step 1/1. In terms of biological role, converts heme B (protoheme IX) to heme O by substitution of the vinyl group on carbon 2 of heme B porphyrin ring with a hydroxyethyl farnesyl side group. The chain is Protoheme IX farnesyltransferase from Nitrosomonas eutropha (strain DSM 101675 / C91 / Nm57).